Reading from the N-terminus, the 119-residue chain is Large ribosomal subunit protein uL22 (119 aa).

It belongs to the universal ribosomal protein uL22 family. In terms of assembly, part of the 50S ribosomal subunit.

In terms of biological role, this protein binds specifically to 23S rRNA; its binding is stimulated by other ribosomal proteins, e.g. L4, L17, and L20. It is important during the early stages of 50S assembly. It makes multiple contacts with different domains of the 23S rRNA in the assembled 50S subunit and ribosome. Functionally, the globular domain of the protein is located near the polypeptide exit tunnel on the outside of the subunit, while an extended beta-hairpin is found that lines the wall of the exit tunnel in the center of the 70S ribosome. The polypeptide is Large ribosomal subunit protein uL22 (Rickettsia prowazekii (strain Madrid E)).